A 127-amino-acid polypeptide reads, in one-letter code: 3-aminoacrylate deaminase RutC (127 aa).

It belongs to the RutC family.

The enzyme catalyses (Z)-3-aminoacrylate + H2O + H(+) = 3-oxopropanoate + NH4(+). Functionally, involved in pyrimidine catabolism. Catalyzes the deamination of 3-aminoacrylate to malonic semialdehyde, a reaction that can also occur spontaneously. RutC may facilitate the reaction and modulate the metabolic fitness, rather than catalyzing essential functions. The sequence is that of 3-aminoacrylate deaminase RutC from Pseudomonas savastanoi pv. phaseolicola (strain 1448A / Race 6) (Pseudomonas syringae pv. phaseolicola (strain 1448A / Race 6)).